The chain runs to 331 residues: Cytosolic arginine sensor for mTORC1 subunit 1 (331 aa).

S14 bears the Phosphoserine mark. ACT domains are found at residues 72–137 (AEAT…HTLA) and 259–320 (GELW…DILQ). Residues 110-111 (SV), G273, 279-280 (IV), and 299-303 (TFNFD) contribute to the L-arginine site.

This sequence belongs to the GATS family. In terms of assembly, forms homodimers and heterodimers with CASTOR2. Interacts with the GATOR2 complex which is composed of MIOS, SEC13, SEH1L, WDR24 and WDR59; the interaction is negatively regulated by arginine. Interacts with TM4SF5; the interaction is positively regulated by leucine and is negatively regulated by arginine. Post-translationally, phosphorylation at Ser-14 by AKT1, promoting the interaction between CASTOR1 and RNF167. Ubiquitinated by RNF167 via 'Lys-29'-polyubiquitination, leading to its degradation, releasing the GATOR2 complex. Ubiquitination by RNF167 is promoted by phosphorylation at Ser-14 by AKT1.

The protein localises to the cytoplasm. It localises to the cytosol. Functionally, functions as an intracellular arginine sensor within the amino acid-sensing branch of the TORC1 signaling pathway. As a homodimer or a heterodimer with CASTOR2, binds and inhibits the GATOR subcomplex GATOR2 and thereby mTORC1. Binding of arginine to CASTOR1 allosterically disrupts the interaction of CASTOR1-containing dimers with GATOR2 which can in turn activate mTORC1 and the TORC1 signaling pathway. This is Cytosolic arginine sensor for mTORC1 subunit 1 from Mus musculus (Mouse).